A 382-amino-acid polypeptide reads, in one-letter code: uncharacterized protein (382 aa).

A run of 10 helical transmembrane segments spans residues 8-28 (VLLL…LNTL), 41-61 (WQVG…TLIA), 73-93 (SYHC…LTVD), 94-114 (FWSW…IWVI), 133-153 (AAYM…LGIV), 157-177 (LLSV…PLLF), 208-228 (GCII…LYLS), 274-294 (VVIL…ALFI), 325-345 (ALLM…SLLM), and 349-369 (SDNL…MMLL).

The protein belongs to the major facilitator superfamily. YcaD (TC 2.A.1.26) family.

The protein localises to the cell inner membrane. This is an uncharacterized protein from Yersinia pseudotuberculosis serotype O:3 (strain YPIII).